A 277-amino-acid polypeptide reads, in one-letter code: Lectin 1 (277 aa).

Positions 1-30 (MSFSSSNFYVILSISLTVFILLFNINKVNS) are cleaved as a signal peptide. An N-linked (GlcNAc...) asparagine glycan is attached at N143. 2 residues coordinate Mn(2+): E152 and D154. 3 residues coordinate Ca(2+): D154, N158, and D161. Mn(2+)-binding residues include D161 and H167. N-linked (GlcNAc...) asparagine glycosylation is present at N269.

It belongs to the leguminous lectin family.

Its function is as follows. Lectin that may be involved in a cell recognition process. This is Lectin 1 (LEC1) from Medicago truncatula (Barrel medic).